A 1297-amino-acid chain; its full sequence is Probable bifunctional E2/E3 enzyme R795 (1297 aa).

An RING-type; atypical zinc finger spans residues 74–128 (CAICRYQENEPCIEHKSSESNTKCPIAQSVSCSHSFHACCISRWLHTKKTCPLCN). Residues 678–750 (EPLQEFLCPI…RDWKENNTVI (73 aa)) enclose the U-box domain. A VWFA domain is found at 899–1082 (EMTLEIHSSN…LDIMELETMI (184 aa)). The 147-residue stretch at 1133 to 1279 (QKLIRVQREI…IIDYVNKFAL (147 aa)) folds into the UBC core domain. Cys-1217 serves as the catalytic Glycyl thioester intermediate.

This sequence in the C-terminal section; belongs to the ubiquitin-conjugating enzyme family.

It carries out the reaction S-ubiquitinyl-[E2 ubiquitin-conjugating enzyme]-L-cysteine + [acceptor protein]-L-lysine = [E2 ubiquitin-conjugating enzyme]-L-cysteine + N(6)-ubiquitinyl-[acceptor protein]-L-lysine.. It catalyses the reaction S-ubiquitinyl-[E1 ubiquitin-activating enzyme]-L-cysteine + [E2 ubiquitin-conjugating enzyme]-L-cysteine = [E1 ubiquitin-activating enzyme]-L-cysteine + S-ubiquitinyl-[E2 ubiquitin-conjugating enzyme]-L-cysteine.. It participates in protein modification; protein ubiquitination. Catalyzes the covalent attachment of ubiquitin to other proteins. Also acts as an E3 ubiquitin-protein ligase. The protein is Probable bifunctional E2/E3 enzyme R795 of Acanthamoeba polyphaga (Amoeba).